The chain runs to 236 residues: tRNA1(Val) (adenine(37)-N6)-methyltransferase (236 aa).

Belongs to the methyltransferase superfamily. tRNA (adenine-N(6)-)-methyltransferase family.

Its subcellular location is the cytoplasm. It catalyses the reaction adenosine(37) in tRNA1(Val) + S-adenosyl-L-methionine = N(6)-methyladenosine(37) in tRNA1(Val) + S-adenosyl-L-homocysteine + H(+). Specifically methylates the adenine in position 37 of tRNA(1)(Val) (anticodon cmo5UAC). The chain is tRNA1(Val) (adenine(37)-N6)-methyltransferase from Histophilus somni (strain 129Pt) (Haemophilus somnus).